The sequence spans 335 residues: GTPase Obg (335 aa).

The 158-residue stretch at 1–158 (MFLDQITIEL…RQVELELKLI (158 aa)) folds into the Obg domain. In terms of domain architecture, OBG-type G spans 159–334 (ADIGLVGFPN…LNSLFTNKLA (176 aa)). GTP is bound by residues 165-172 (GFPNAGKS), 190-194 (FTTLQ), 215-218 (DIPG), 285-288 (NKID), and 315-317 (SGL). Mg(2+) is bound by residues Ser172 and Thr192.

The protein belongs to the TRAFAC class OBG-HflX-like GTPase superfamily. OBG GTPase family. In terms of assembly, monomer. Mg(2+) serves as cofactor.

It is found in the cytoplasm. An essential GTPase (4.1 pmol GTP/min). Cannot substitute endogenous obg in E.coli, has a partially dominant-negative phenotype upon overexpression in liquid culture leading to decreased growth rate in a concentration-dependent fashion, with 50% of cells being elongated. Binds GTP, GDP and possibly (p)ppGpp with moderate affinity, with high nucleotide exchange rates and a fairly low GTP hydrolysis rate. It may play a role in control of the cell cycle, stress response, ribosome biogenesis and in those bacteria that undergo differentiation, in morphogenesis control. This is GTPase Obg from Chlamydia abortus (strain DSM 27085 / S26/3) (Chlamydophila abortus).